Here is a 331-residue protein sequence, read N- to C-terminus: Methionyl-tRNA formyltransferase (331 aa).

110 to 113 serves as a coordination point for (6S)-5,6,7,8-tetrahydrofolate; it reads SLLP. Residues 312–331 form a disordered region; sequence HAPAERVSAAGSPAGAGGAP.

This sequence belongs to the Fmt family.

It carries out the reaction L-methionyl-tRNA(fMet) + (6R)-10-formyltetrahydrofolate = N-formyl-L-methionyl-tRNA(fMet) + (6S)-5,6,7,8-tetrahydrofolate + H(+). Attaches a formyl group to the free amino group of methionyl-tRNA(fMet). The formyl group appears to play a dual role in the initiator identity of N-formylmethionyl-tRNA by promoting its recognition by IF2 and preventing the misappropriation of this tRNA by the elongation apparatus. The polypeptide is Methionyl-tRNA formyltransferase (Frankia alni (strain DSM 45986 / CECT 9034 / ACN14a)).